We begin with the raw amino-acid sequence, 313 residues long: Olfactory receptor 4M2 (313 aa).

Topologically, residues 1–25 (METANYTKVTEFVLTGLSQTPEVQL) are extracellular. N-linked (GlcNAc...) asparagine glycosylation occurs at asparagine 5. The helical transmembrane segment at 26–49 (VLFVIFLSFYLFILPGNILIICTI) threads the bilayer. Residues 50 to 57 (SLDPHLTS) are Cytoplasmic-facing. The helical transmembrane segment at 58-79 (PMYFLLANLAFLDIWYSSITAP) threads the bilayer. The Extracellular portion of the chain corresponds to 80–100 (EMLIDFFVERKIISFDGCIAQ). Cysteines 97 and 189 form a disulfide. A helical transmembrane segment spans residues 101-120 (LFFLHFAGASEMFLLTVMAF). The Cytoplasmic segment spans residues 121 to 139 (DLYTAICRPLHYATIMNQR). A helical transmembrane segment spans residues 140-158 (LCCILVALSWRGGFIHSII). The Extracellular segment spans residues 159-195 (QVALIVRLPFCGPNELDSYFCDITQVVRIACANTFPE). A helical membrane pass occupies residues 196-219 (ELVMICSSGLISVVCLIALLMSYA). Residues 220-237 (FLLALFKKLSGSGENTNR) lie on the Cytoplasmic side of the membrane. A helical membrane pass occupies residues 238 to 260 (AMSTCYSHITIVVLMFGPSIYIY). Over 261-271 (ARPFDSFSLDK) the chain is Extracellular. The chain crosses the membrane as a helical span at residues 272-291 (VVSVFNTLIFPLRNPIIYTL). The Cytoplasmic portion of the chain corresponds to 292-313 (RNKEVKAAMRKLVTKYILCKEK).

It belongs to the G-protein coupled receptor 1 family.

It is found in the cell membrane. In terms of biological role, odorant receptor. The protein is Olfactory receptor 4M2 (OR4M2) of Homo sapiens (Human).